A 1472-amino-acid polypeptide reads, in one-letter code: ABC transporter FGM5 (1472 aa).

11 helical membrane passes run 32-52, 67-87, 100-120, 163-183, 197-217, 271-291, 316-336, 386-406, 412-432, 493-513, and 534-554; these read IILG…RVAT, FTKL…LILS, FAVA…ALSF, YAGV…LELQ, SPEE…IGIF, ALIV…GFQY, GLIG…ALFW, FHGL…CFLL, LAFI…TAIA, LLIM…VVAF, and LLTN…AAFV. The ABC transmembrane type-1 1 domain occupies 284 to 551; the sequence is IAMIGFQYAQ…MFQSVPAVIA (268 aa). One can recognise an ABC transporter 1 domain in the interval 605–834; the sequence is ISIVDGSFGW…GIYIPTLGLS (230 aa). Residue 638 to 645 coordinates ATP; sequence GPVASGKS. Asn682, Asn696, Asn763, Asn784, and Asn843 each carry an N-linked (GlcNAc...) asparagine glycan. 4 helical membrane passes run 900 to 920, 938 to 958, 1003 to 1023, and 1024 to 1044; these read LLSG…MGWW, LFRG…VIFM, GELP…FAMA, and VVVA…FSII. The ABC transmembrane type-1 2 domain occupies 900-1139; it reads LLSGIMYAVG…VGVVAISTQL (240 aa). The N-linked (GlcNAc...) asparagine glycan is linked to Asn1101. A helical transmembrane segment spans residues 1116-1136; that stretch reads FLATFLNLIVMVLAVGVVAIS. Positions 1218–1468 constitute an ABC transporter 2 domain; sequence YKNDDESPAS…EGSWFSQLWA (251 aa). 1255–1262 contacts ATP; the sequence is GRTGSGKS. N-linked (GlcNAc...) asparagine glycans are attached at residues Asn1277 and Asn1293.

This sequence belongs to the ABC transporter superfamily. ABCC family. Conjugate transporter (TC 3.A.1.208) subfamily.

The protein localises to the cell membrane. It participates in secondary metabolite biosynthesis. In terms of biological role, ABC transporter; part of the Fg3_54/C64 gene cluster that mediates the biosynthesis of the octapeptide fusaoctaxin A, a virulence factor that is required for cell-to-cell invasiveness of plant host. The 2 nonribosomal peptide synthetases NRPS9 and NRPS5 form an assembly line which likely utilizes GABA as a starter unit (loaded on the unique module M1 of NRPS9) and sequentially incorporates seven extender units composed of the residues L-Ala, L-allo-Ile, L-Ser, L-Val, L-Ser, L-Leu and L-Leu, respectively. During the process, each of the residues that are tethered on modules M3-M7 of NRPS5 containing an E domain can undergo an epimerization reaction to produce a D-configuration before the transpeptidation reaction occurs. The elongation of the peptidyl chain might be terminated by module M8-mediated L-Leu incorporation, followed by R domain-catalyzed 4 electron reduction to release the resulting octapeptide from the assembly line as an alcohol. Fusaoctaxin A is cleaved by the cluster specific ABC transporter FGM5 to the pentapeptide fusapentaxin A and the tripeptide fusatrixin A. The other enzymes from the cluster, FGM1, FGM2, FGM3 and FGM9 seem not to be involved in the biosynthesis of fusaoctaxin A and their functions have still to be determined. The chain is ABC transporter FGM5 from Gibberella zeae (strain ATCC MYA-4620 / CBS 123657 / FGSC 9075 / NRRL 31084 / PH-1) (Wheat head blight fungus).